Here is a 257-residue protein sequence, read N- to C-terminus: 5-oxoprolinase subunit A (257 aa).

The protein belongs to the LamB/PxpA family. In terms of assembly, forms a complex composed of PxpA, PxpB and PxpC.

The catalysed reaction is 5-oxo-L-proline + ATP + 2 H2O = L-glutamate + ADP + phosphate + H(+). Catalyzes the cleavage of 5-oxoproline to form L-glutamate coupled to the hydrolysis of ATP to ADP and inorganic phosphate. The sequence is that of 5-oxoprolinase subunit A from Oceanobacillus iheyensis (strain DSM 14371 / CIP 107618 / JCM 11309 / KCTC 3954 / HTE831).